The primary structure comprises 734 residues: MATKFPKFSQALAQDPTTRRIWYGIATAHDFESHDGMTEENLYQKIFSSHFGHIAIIFLWTSGNLFHVAWQGNFEQWVAQPMKIKPIAHAIWDPHFGQPAVKAFTKGGASYPVDITFSGVYHWWYTIGMRTNNDLYNGSLFLLILSAIMLFAGWLHLQPKFKPGLSWFKNNESRLNHHLSGLFGLSSLAWTGHLIHVAIPESRGQHVGWDNFTYTLPHPAGLQPFFTGNWSVYASDPDTSNHIFGTSQGAGTAILTFLGGFHPQSQSLWLTDMAHHHLAIAIVFIIAGHMYKTNWGIGHNIKDILDAHRPPSGRLGKGHKGLYATITNSLHMQLGLALASLGVITSLVAQHMYAMPPYAFMAKDFTTQAALYTHHQYIAGFLMVGAFAHGAIFFIRDYDPEENKNNVLFRMLDHKEAIISHLSWVSLFLGFHTLGLYIHNDTMIAFGTPEKQILIEPVFAQWIQASSGKALYGFNTLLSSSSSIATKAGSSVWLPGWLEAINSNKNSLFLAIGPGDFLVHHAIALGLHTTTLILVKGALDARGSKLMPDKKDFGYSFPCDGPGRGGTCDISAWDAFYLSVFWMLNTIGWVTFYWHWKHMTIWQGNVNQFNESSTYLMGWLRDYLWLNSSPLINGYNPYGMNNLSVWAWMFLFGHLVWATGFMFLISWRGYWQELIETLAWAHERTPLANLVRWKDKPVALSIVQARLVGLVHFSVGYILTYAAFVIASTSGKFG.

A run of 8 helical transmembrane segments spans residues 46-69 (IFSS…FHVA), 135-158 (LYNG…LHLQ), 175-199 (LNHH…HVAI), 273-291 (MAHH…GHMY), 330-353 (LHMQ…QHMY), 369-395 (AALY…IFFI), 417-439 (AIIS…LYIH), and 517-535 (FLVH…LILV). Cys-559 and Cys-568 together coordinate [4Fe-4S] cluster. Helical transmembrane passes span 575-596 (AFYL…YWHW) and 643-665 (LSVW…MFLI). His-654, Met-662, and Tyr-670 together coordinate chlorophyll a. Phylloquinone is bound at residue Trp-671. Residues 707–727 (LVGLVHFSVGYILTYAAFVIA) form a helical membrane-spanning segment.

It belongs to the PsaA/PsaB family. In terms of assembly, the PsaA/B heterodimer binds the P700 chlorophyll special pair and subsequent electron acceptors. PSI consists of a core antenna complex that captures photons, and an electron transfer chain that converts photonic excitation into a charge separation. The eukaryotic PSI reaction center is composed of at least 11 subunits. The cofactor is P700 is a chlorophyll a/chlorophyll a' dimer, A0 is one or more chlorophyll a, A1 is one or both phylloquinones and FX is a shared 4Fe-4S iron-sulfur center..

It localises to the plastid. It is found in the chloroplast thylakoid membrane. It catalyses the reaction reduced [plastocyanin] + hnu + oxidized [2Fe-2S]-[ferredoxin] = oxidized [plastocyanin] + reduced [2Fe-2S]-[ferredoxin]. In terms of biological role, psaA and PsaB bind P700, the primary electron donor of photosystem I (PSI), as well as the electron acceptors A0, A1 and FX. PSI is a plastocyanin/cytochrome c6-ferredoxin oxidoreductase, converting photonic excitation into a charge separation, which transfers an electron from the donor P700 chlorophyll pair to the spectroscopically characterized acceptors A0, A1, FX, FA and FB in turn. Oxidized P700 is reduced on the lumenal side of the thylakoid membrane by plastocyanin or cytochrome c6. This Gracilaria tenuistipitata var. liui (Red alga) protein is Photosystem I P700 chlorophyll a apoprotein A2.